The following is a 257-amino-acid chain: ATP synthase subunit a (257 aa).

Residues 1-8 constitute a propeptide, removed in mature form; sequence MRHLDFVL. Transmembrane regions (helical) follow at residues 34-54, 93-113, 122-142, 149-169, 187-207, 210-230, and 231-251; these read LTNI…YSLL, FFPL…IGLV, HFIL…ILGF, FFSL…LVLI, ANIL…YNIM, GIIF…FSGL, and ELAI…SYIK.

Belongs to the ATPase A chain family. F-type ATPases have 2 components, CF(1) - the catalytic core - and CF(0) - the membrane proton channel. CF(1) has five subunits: alpha(3), beta(3), gamma(1), delta(1), epsilon(1). CF(0) has three main subunits: a, b and c.

It is found in the mitochondrion inner membrane. Mitochondrial membrane ATP synthase (F(1)F(0) ATP synthase or Complex V) produces ATP from ADP in the presence of a proton gradient across the membrane which is generated by electron transport complexes of the respiratory chain. F-type ATPases consist of two structural domains, F(1) - containing the extramembraneous catalytic core and F(0) - containing the membrane proton channel, linked together by a central stalk and a peripheral stalk. During catalysis, ATP synthesis in the catalytic domain of F(1) is coupled via a rotary mechanism of the central stalk subunits to proton translocation. Key component of the proton channel; it may play a direct role in the translocation of protons across the membrane. This is ATP synthase subunit a (atp6) from Penicillium chrysogenum (Penicillium notatum).